Reading from the N-terminus, the 219-residue chain is uncharacterized protein (219 aa).

D58 is an active-site residue.

This sequence belongs to the pseudouridine synthase RluA family.

It catalyses the reaction a uridine in RNA = a pseudouridine in RNA. This is an uncharacterized protein from Zymomonas mobilis subsp. mobilis (strain ATCC 31821 / ZM4 / CP4).